A 453-amino-acid chain; its full sequence is Calcium-binding tyrosine phosphorylation-regulated protein (453 aa).

One can recognise an RIIa domain in the interval 12 to 49 (YGLKTLLEGVSRAILKTNPTNITQFAAVYFKELIVFRE). Disordered regions lie at residues 86–165 (PIKP…PVSA), 246–278 (PVSE…QVTS), and 406–453 (IINP…PEQV). Positions 143-154 (DKPTTPKTDYTP) are enriched in low complexity.

As to quaternary structure, interacts with FSCB. In terms of processing, phosphorylated on tyrosine residues during in vitro capacitation. Dephosphorylation affects its ability to bind calcium. Expressed in spermatozoa.

The protein resides in the cytoplasm. The protein localises to the cytoskeleton. Its subcellular location is the cell projection. It localises to the cilium. It is found in the flagellum. In terms of biological role, may function as a regulator of both motility- and head-associated functions such as capacitation and the acrosome reaction. May bind calcium in vitro. This Mus musculus (Mouse) protein is Calcium-binding tyrosine phosphorylation-regulated protein (Cabyr).